Here is a 101-residue protein sequence, read N- to C-terminus: Large ribosomal subunit protein uL24 (101 aa).

This sequence belongs to the universal ribosomal protein uL24 family. As to quaternary structure, part of the 50S ribosomal subunit.

One of two assembly initiator proteins, it binds directly to the 5'-end of the 23S rRNA, where it nucleates assembly of the 50S subunit. Functionally, one of the proteins that surrounds the polypeptide exit tunnel on the outside of the subunit. In Paracoccus denitrificans (strain Pd 1222), this protein is Large ribosomal subunit protein uL24.